The primary structure comprises 461 residues: Transforming growth factor beta-1-induced transcript 1 protein (461 aa).

Position 1 is an N-acetylmethionine (Met1). Residues 1–86 form a disordered region; sequence MEDLDALLSD…PPFSSSSGVL (86 aa). The segment at 1–200 is transcription activation; the sequence is MEDLDALLSD…GCPSPPGQTN (200 aa). The interaction with PTK2B/PYK2 stretch occupies residues 1–240; that stretch reads MEDLDALLSD…CNKPIAGQVV (240 aa). Positions 3-15 match the LD motif 1 motif; it reads DLDALLSDLETTT. At Thr33 the chain carries Phosphothreonine. Tyr38 bears the Phosphotyrosine mark. Polar residues predominate over residues 41–52; the sequence is QPQTGSGESSGA. Tyr60 is subject to Phosphotyrosine; by FAK2 and FYN. Phosphoserine is present on Ser68. Over residues 69-83 the composition is skewed to low complexity; the sequence is PKSVAPVAPPFSSSS. The interaction with PTK2/FAK1 stretch occupies residues 83 to 136; it reads SGVLGNGLCELDRLLQELNATQFNITDEIMSQFPSSKMAEGEGKEDQSEDKSIT. The short motif at 92–104 is the LD motif 2 element; sequence ELDRLLQELNATQ. The disordered stretch occupies residues 116 to 154; the sequence is PSSKMAEGEGKEDQSEDKSITTVPSSTFPAPSKPSATSA. Positions 121-134 are enriched in basic and acidic residues; that stretch reads AEGEGKEDQSEDKS. Polar residues predominate over residues 135-154; that stretch reads ITTVPSSTFPAPSKPSATSA. Phosphoserine occurs at positions 140, 141, 164, and 186. Positions 157–168 match the LD motif 3 motif; it reads ELDRLMASLSDF. The interval 171–204 is disordered; it reads QNHLPASGPPQPPAVSPTREGCPSPPGQTNKGSL. Thr188 carries the post-translational modification Phosphothreonine. Ser194 is subject to Phosphoserine. Residues 203 to 215 carry the LD motif 4 motif; sequence SLDTMLGLLQSDL. LIM zinc-binding domains are found at residues 226–285, 286–343, 344–403, and 404–461; these read GLCG…RFSP, RCGF…QLFA, PRCQ…QRGS, and LCAT…KLFG. Ser403 carries the post-translational modification Phosphoserine. Thr407 carries the post-translational modification Phosphothreonine.

The protein belongs to the paxillin family. Homooligomer. Interacts with PPARG. Interacts with TRAF4. Interacts with CRIP2. Interacts with HSPB1. Interacts with ILK. Interacts with LIMS1 and LIMS2. Interacts with NCK2. Interacts with NUDT16L1. Interacts with PAK. Interacts with PTPN12. Interacts with TCF3. Interacts with TCF7L2. Interacts with VCL. Interacts (via LD motif 3) with GIT1. Also interacts with GIT2. Forms a complex with ARHGEF7. Interacts with AR/androgen receptor in a ligand-dependent manner. Interacts with CSK. Interacts with PTK2/FAK1 and PTK2B/PYK2. Interacts with SLC6A3 and SLC6A4. Interacts with NR3C1. Interacts with SMAD3. Interacts with MAPK15. Interacts with SRC. Interacts with LYN. Interacts with talin. Interacts (via LIM zinc-binding domain 2) with CBLC (via RING-type zinc finger); the interaction is direct and enhances CBLC E3 ubiquitin-protein ligase activity. Interacts with PARVA. Interacts with PXN. Post-translationally, phosphorylated by gonadotropin-releasing hormone-activated SRC. Strongly expressed in large intestine, lung, spleen, testis, uterus and to a lower extent in brain, kidney and liver (at protein level). In brain, expressed by neuronal and non neuronal cells (at protein level).

The protein resides in the cell junction. It is found in the focal adhesion. It localises to the nucleus matrix. The protein localises to the cytoplasm. Its subcellular location is the cytoskeleton. In terms of biological role, functions as a molecular adapter coordinating multiple protein-protein interactions at the focal adhesion complex and in the nucleus. Links various intracellular signaling modules to plasma membrane receptors and regulates the Wnt and TGFB signaling pathways. May also regulate SLC6A3 and SLC6A4 targeting to the plasma membrane hence regulating their activity. In the nucleus, functions as a nuclear receptor coactivator regulating glucocorticoid, androgen, mineralocorticoid and progesterone receptor transcriptional activity. May play a role in the processes of cell growth, proliferation, migration, differentiation and senescence. May have a zinc-dependent DNA-binding activity. This Rattus norvegicus (Rat) protein is Transforming growth factor beta-1-induced transcript 1 protein (Tgfb1i1).